A 546-amino-acid chain; its full sequence is Aladin (546 aa).

Position 2 is an N-acetylcysteine (C2). A Phosphoserine modification is found at S33. 7 WD repeats span residues 142–180 (EFAQVTNWSSCCLRVFAWHPHTNKFAVALLDDSVRVYNA), 183–222 (TIVPSLKHRLQRNVASLAWKPLSASVLAVACQSCILIWTL), 234–274 (GCAQ…VWDV), 280–316 (VPLPWFRGGGVTNLLWSPDGSKILATTPSAVFRVWEA), 324–380 (WPTL…IVAD), 386–433 (IQTP…LFRT), and 442–482 (LPCG…IAHI). A phosphoserine mark is found at S495, S511, S522, and S525. The tract at residues 500–546 (RAQEPPAGGGGSIHDLPLFTETSPTSAPWDPLPGPPPVLPHSPHSHL) is disordered. The segment covering 529–539 (DPLPGPPPVLP) has biased composition (pro residues). S541 carries the phosphoserine modification. The Microbody targeting signal signature appears at 544–546 (SHL).

Interacts with NDC1, the interaction is required for nuclear pore localization. Interacts with the inactive form aurora kinase AURKA. Interacts with PGRMC2. As to expression, widely expressed. Particularly abundant in cerebellum, corpus callosum, adrenal gland, pituitary gland, gastrointestinal structures and fetal lung.

It localises to the nucleus. Its subcellular location is the nuclear pore complex. The protein localises to the cytoplasm. The protein resides in the cytoskeleton. It is found in the spindle pole. It localises to the nucleus envelope. Its function is as follows. Plays a role in the normal development of the peripheral and central nervous system. Required for the correct localization of aurora kinase AURKA and the microtubule minus end-binding protein NUMA1 as well as a subset of AURKA targets which ensures proper spindle formation and timely chromosome alignment. The sequence is that of Aladin (AAAS) from Homo sapiens (Human).